A 429-amino-acid chain; its full sequence is MSAIVDIIGREVLDSRGNPTVECDVLLESGVMGRAAVPSGASTGSREAIELRDGDKSRYLGKGVLKAVEHINTEISEAIMGLDASEQAFLDRTLIELDGTENKGRLGANAMLAVSMAVAKAAAEEAGLPLYRYFGGSGAMQMPVPMMNIVNGGAHANNSLDIQEFMIMPVSQTSFREALRCGAEVFHALKKILSDKGMSTAVGDEGGFAPNFSSNEECLNTVVQAIEKAGYKAGEDVLLALDCAASEFYHEAEGVYSLEGEGLKLTSTQFADYLANLCDKFPIVSIEDGMAEGDWEGWKTLTDKLGKRVQLVGDDLFVTNTKILKEGIEKGIGNSILIKINQIGTLTETFAAIEMAKRAGYTAVISHRSGETEDSTIADIAVGTNAGQIKTGSLSRSDRISKYNQLLRIEEDLGDIATYPGKSTFYNLR.

Gln-163 serves as a coordination point for (2R)-2-phosphoglycerate. Glu-205 (proton donor) is an active-site residue. Mg(2+) is bound by residues Asp-242, Glu-287, and Asp-314. 4 residues coordinate (2R)-2-phosphoglycerate: Lys-339, Arg-368, Ser-369, and Lys-390. Lys-339 acts as the Proton acceptor in catalysis.

Belongs to the enolase family. Requires Mg(2+) as cofactor.

It is found in the cytoplasm. The protein resides in the secreted. It localises to the cell surface. The enzyme catalyses (2R)-2-phosphoglycerate = phosphoenolpyruvate + H2O. It functions in the pathway carbohydrate degradation; glycolysis; pyruvate from D-glyceraldehyde 3-phosphate: step 4/5. Its function is as follows. Catalyzes the reversible conversion of 2-phosphoglycerate (2-PG) into phosphoenolpyruvate (PEP). It is essential for the degradation of carbohydrates via glycolysis. In Cupriavidus metallidurans (strain ATCC 43123 / DSM 2839 / NBRC 102507 / CH34) (Ralstonia metallidurans), this protein is Enolase 1.